Reading from the N-terminus, the 237-residue chain is Cytidylate kinase (237 aa).

Residue 15-23 coordinates ATP; the sequence is GPSGSGKGT.

Belongs to the cytidylate kinase family. Type 1 subfamily.

The protein resides in the cytoplasm. It carries out the reaction CMP + ATP = CDP + ADP. The catalysed reaction is dCMP + ATP = dCDP + ADP. In Coxiella burnetii (strain RSA 493 / Nine Mile phase I), this protein is Cytidylate kinase.